A 185-amino-acid polypeptide reads, in one-letter code: Ribose 1,5-bisphosphate phosphokinase PhnN (185 aa).

Gly10–Asp17 is a binding site for ATP.

This sequence belongs to the ribose 1,5-bisphosphokinase family.

It carries out the reaction alpha-D-ribose 1,5-bisphosphate + ATP = 5-phospho-alpha-D-ribose 1-diphosphate + ADP. Its pathway is metabolic intermediate biosynthesis; 5-phospho-alpha-D-ribose 1-diphosphate biosynthesis; 5-phospho-alpha-D-ribose 1-diphosphate from D-ribose 5-phosphate (route II): step 3/3. Functionally, catalyzes the phosphorylation of ribose 1,5-bisphosphate to 5-phospho-D-ribosyl alpha-1-diphosphate (PRPP). In Shigella dysenteriae serotype 1 (strain Sd197), this protein is Ribose 1,5-bisphosphate phosphokinase PhnN.